The primary structure comprises 251 residues: Chlorocatechol 1,2-dioxygenase (251 aa).

Fe cation-binding residues include tyrosine 130, tyrosine 164, histidine 188, and histidine 190.

The protein belongs to the intradiol ring-cleavage dioxygenase family. Fe(3+) is required as a cofactor.

It catalyses the reaction 3-chlorocatechol + O2 = (2E,4Z)-2-chloromuconate + 2 H(+). The catalysed reaction is 3,4-dichlorocatechol + O2 = (2Z,4Z)-2,3-dichloromuconate + 2 H(+). It carries out the reaction 3,5-dichlorocatechol + O2 = (2E,4E)-2,4-dichloromuconate + 2 H(+). The enzyme catalyses 3,6-dichlorocatechol + O2 = (2E,4E)-2,5-dichloromuconate + H(+). It catalyses the reaction 3,4,6-trichlorocatechol + O2 = (2Z,4E)-2,3,5-trichloromuconate + H(+). Its pathway is xenobiotic degradation. Chlorocatechol 1,2-dioxygenase involved in the degradation of chlorinated benzenes, that occurs via chlorocatechol intermediates. Displays broad substrate specificity. Preferentially cleaves 3-chlorocatechol and 3,4-dichlorocatechol, and shows lower activity on 3,5-dichlorocatechol, 3,6-dichlorocatechol and 3,4,6-trichlorocatechol in vitro. Is not able to convert 3,4,5-trichlorocatechol and 3,4,5,6-tetrachlorocatechol. Thus, probably functions in the degradation pathways of 1,2-dichlorobenzene, 1,4-dichlorobenzene and 1,2,4-trichlorobenzene (via 3,4-dichlorocatechol, 3,6-dichlorocatechol and 3,4,6-trichlorocatechol intermediates, respectively), which allow Pseudomonas sp. strain P51 to grow on these substrates as the sole carbon and energy source. The protein is Chlorocatechol 1,2-dioxygenase of Pseudomonas sp. (strain P51).